Consider the following 415-residue polypeptide: Squalene synthase 10 (415 aa).

Transmembrane regions (helical) follow at residues 281 to 301 (AIFRFCAIPQIMAIGTLALCF) and 392 to 412 (LIVILFIILAILYAYLSSNLP).

It belongs to the phytoene/squalene synthase family. Mg(2+) serves as cofactor. Mn(2+) is required as a cofactor.

It localises to the endoplasmic reticulum membrane. The catalysed reaction is 2 (2E,6E)-farnesyl diphosphate + NADH + H(+) = squalene + 2 diphosphate + NAD(+). It catalyses the reaction 2 (2E,6E)-farnesyl diphosphate + NADPH + H(+) = squalene + 2 diphosphate + NADP(+). It functions in the pathway terpene metabolism; lanosterol biosynthesis; lanosterol from farnesyl diphosphate: step 1/3. Component of the triterpene saponins (e.g. ginsenosides or panaxosides) and phytosterols biosynthetic pathways. Catalyzes the biosynthesis of squalene. This Panax ginseng (Korean ginseng) protein is Squalene synthase 10.